A 339-amino-acid chain; its full sequence is tRNA(Ile)-lysidine synthase (339 aa).

34–39 provides a ligand contact to ATP; that stretch reads SGGPDS.

The protein belongs to the tRNA(Ile)-lysidine synthase family.

The protein localises to the cytoplasm. It carries out the reaction cytidine(34) in tRNA(Ile2) + L-lysine + ATP = lysidine(34) in tRNA(Ile2) + AMP + diphosphate + H(+). Its function is as follows. Ligates lysine onto the cytidine present at position 34 of the AUA codon-specific tRNA(Ile) that contains the anticodon CAU, in an ATP-dependent manner. Cytidine is converted to lysidine, thus changing the amino acid specificity of the tRNA from methionine to isoleucine. The chain is tRNA(Ile)-lysidine synthase from Methylobacterium nodulans (strain LMG 21967 / CNCM I-2342 / ORS 2060).